The chain runs to 504 residues: UDP-N-acetylmuramoylalanine--D-glutamate ligase (504 aa).

Residue 129-135 coordinates ATP; the sequence is GTNGKTT.

It belongs to the MurCDEF family.

The protein localises to the cytoplasm. It catalyses the reaction UDP-N-acetyl-alpha-D-muramoyl-L-alanine + D-glutamate + ATP = UDP-N-acetyl-alpha-D-muramoyl-L-alanyl-D-glutamate + ADP + phosphate + H(+). It functions in the pathway cell wall biogenesis; peptidoglycan biosynthesis. Functionally, cell wall formation. Catalyzes the addition of glutamate to the nucleotide precursor UDP-N-acetylmuramoyl-L-alanine (UMA). This chain is UDP-N-acetylmuramoylalanine--D-glutamate ligase, found in Burkholderia pseudomallei (strain 668).